The primary structure comprises 588 residues: Retrograde regulation protein 2 (588 aa).

Belongs to the GppA/Ppx family.

Required for a novel path of interorganelle communication between mitochondria, peroxisomes and the nucleus, thereby maintaining a functional metabolic interaction between the tricarboxylic acid and glyoxylate cycles. In particular, required for the retrograde expression of the peroxisomal isoform of citrate synthase, CIT2. The protein is Retrograde regulation protein 2 (RTG2) of Saccharomyces cerevisiae (strain ATCC 204508 / S288c) (Baker's yeast).